A 501-amino-acid polypeptide reads, in one-letter code: Putative antiporter subunit mnhD2 (501 aa).

The next 14 membrane-spanning stretches (helical) occupy residues 4-24, 33-53, 79-99, 109-129, 131-151, 162-182, 207-227, 245-265, 274-294, 309-329, 334-354, 369-389, 409-429, and 452-472; these read SNLLILPLLLPAVCALGLVFI, IFSIGTMAVTTVVSLLLLIYV, LSLLLVTTSSFVVTLIMAYGF, YYLPSFILFLTVGVIGSFLTA, LFNIYVMFEVMLLASFVLITL, IIYVVLNILGSWLLLLGVGLL, IVIVSMVFLIAFSAKAALVLF, FAALMTKVGAYALIRFFTLIF, PLLVFLSCITMLIGAFGVLAY, IGFIILGLGTNTIAGVNGAIF, DIVVKTLLFFIIGSLVYITGL, FFGVAFVVMILAIGGVPPFSG, LALMIITSLIAMFSLFRIFFV, and NLIGVLVAMIIVMGLAAPLLF.

This sequence belongs to the CPA3 antiporters (TC 2.A.63) subunit D family. As to quaternary structure, may form a heterooligomeric complex that consists of seven subunits: mnhA2, mnhB2, mnhC2, mnhD2, mnhE2, mnhF2 and mnhG2.

It is found in the cell membrane. The polypeptide is Putative antiporter subunit mnhD2 (mnhD2) (Staphylococcus saprophyticus subsp. saprophyticus (strain ATCC 15305 / DSM 20229 / NCIMB 8711 / NCTC 7292 / S-41)).